We begin with the raw amino-acid sequence, 81 residues long: ATP synthase subunit c, chloroplastic (81 aa).

Transmembrane regions (helical) follow at residues 3-23 and 57-77; these read PIIS…ASIG and LAFM…LLFA.

This sequence belongs to the ATPase C chain family. F-type ATPases have 2 components, F(1) - the catalytic core - and F(0) - the membrane proton channel. F(1) has five subunits: alpha(3), beta(3), gamma(1), delta(1), epsilon(1). F(0) has four main subunits: a(1), b(1), b'(1) and c(10-14). The alpha and beta chains form an alternating ring which encloses part of the gamma chain. F(1) is attached to F(0) by a central stalk formed by the gamma and epsilon chains, while a peripheral stalk is formed by the delta, b and b' chains.

Its subcellular location is the plastid. The protein localises to the chloroplast thylakoid membrane. Functionally, f(1)F(0) ATP synthase produces ATP from ADP in the presence of a proton or sodium gradient. F-type ATPases consist of two structural domains, F(1) containing the extramembraneous catalytic core and F(0) containing the membrane proton channel, linked together by a central stalk and a peripheral stalk. During catalysis, ATP synthesis in the catalytic domain of F(1) is coupled via a rotary mechanism of the central stalk subunits to proton translocation. Key component of the F(0) channel; it plays a direct role in translocation across the membrane. A homomeric c-ring of between 10-14 subunits forms the central stalk rotor element with the F(1) delta and epsilon subunits. This Welwitschia mirabilis (Tree tumbo) protein is ATP synthase subunit c, chloroplastic.